The primary structure comprises 258 residues: Venom plasminogen activator Haly-PA (258 aa).

The first 18 residues, 1–18 (MALIRVLANLLILQLSYA), serve as a signal peptide directing secretion. The propeptide occupies 19–24 (QKSSEL). In terms of domain architecture, Peptidase S1 spans 25–249 (VVGGDECNIN…HLDWIKSIIA (225 aa)). Intrachain disulfides connect Cys31–Cys163, Cys50–Cys66, Cys98–Cys256, Cys142–Cys210, Cys174–Cys189, and Cys200–Cys225. Asn44 is a glycosylation site (N-linked (GlcNAc...) asparagine). Active-site charge relay system residues include His65 and Asp110. Ser204 (charge relay system) is an active-site residue.

The protein belongs to the peptidase S1 family. Snake venom subfamily. As to quaternary structure, monomer. Post-translationally, glycosylated. As to expression, expressed by the venom gland.

It localises to the secreted. Snake venom serine protease that activates plasminogen. Displays indirect fibrino(geno)lytic activity through conversion of plasminogen to plasmin. Shows a preferential cleavage at Arg-|-Xaa instead of Lys-|-Xaa bonds. The protein is Venom plasminogen activator Haly-PA of Gloydius brevicauda (Korean slamosa snake).